Here is a 245-residue protein sequence, read N- to C-terminus: tRNA (guanine-N(1)-)-methyltransferase (245 aa).

S-adenosyl-L-methionine is bound by residues glycine 113 and 133–138 (IGDYVL).

This sequence belongs to the RNA methyltransferase TrmD family. Homodimer.

It is found in the cytoplasm. The catalysed reaction is guanosine(37) in tRNA + S-adenosyl-L-methionine = N(1)-methylguanosine(37) in tRNA + S-adenosyl-L-homocysteine + H(+). Its function is as follows. Specifically methylates guanosine-37 in various tRNAs. This chain is tRNA (guanine-N(1)-)-methyltransferase, found in Histophilus somni (strain 129Pt) (Haemophilus somnus).